The sequence spans 179 residues: Inner membrane-spanning protein YciB (179 aa).

The next 5 membrane-spanning stretches (helical) occupy residues 22–42 (IYAA…YSWV), 50–70 (MALI…FFHN), 76–96 (WKVT…QWVM), 121–141 (LAWA…AFWL), and 149–169 (FKVF…GIYI).

This sequence belongs to the YciB family.

The protein resides in the cell inner membrane. In terms of biological role, plays a role in cell envelope biogenesis, maintenance of cell envelope integrity and membrane homeostasis. The protein is Inner membrane-spanning protein YciB of Escherichia coli O127:H6 (strain E2348/69 / EPEC).